A 234-amino-acid chain; its full sequence is Large ribosomal subunit protein bL25 (234 aa).

The interval Met1–Arg24 is disordered.

The protein belongs to the bacterial ribosomal protein bL25 family. CTC subfamily. In terms of assembly, part of the 50S ribosomal subunit; part of the 5S rRNA/L5/L18/L25 subcomplex. Contacts the 5S rRNA. Binds to the 5S rRNA independently of L5 and L18.

In terms of biological role, this is one of the proteins that binds to the 5S RNA in the ribosome where it forms part of the central protuberance. This Rhodopseudomonas palustris (strain BisB5) protein is Large ribosomal subunit protein bL25.